The sequence spans 1413 residues: DNA-directed RNA polymerase subunit beta' (1413 aa).

Cys70, Cys72, Cys85, and Cys88 together coordinate Zn(2+). Residues Asp460, Asp462, and Asp464 each coordinate Mg(2+). Residues Cys819, Cys893, Cys900, and Cys903 each coordinate Zn(2+). Residues 1392–1413 form a disordered region; that stretch reads EEAFDFGTPSAPAEEPQHPAAE.

This sequence belongs to the RNA polymerase beta' chain family. The RNAP catalytic core consists of 2 alpha, 1 beta, 1 beta' and 1 omega subunit. When a sigma factor is associated with the core the holoenzyme is formed, which can initiate transcription. The cofactor is Mg(2+). Zn(2+) is required as a cofactor.

The enzyme catalyses RNA(n) + a ribonucleoside 5'-triphosphate = RNA(n+1) + diphosphate. Its function is as follows. DNA-dependent RNA polymerase catalyzes the transcription of DNA into RNA using the four ribonucleoside triphosphates as substrates. This is DNA-directed RNA polymerase subunit beta' from Burkholderia cenocepacia (strain ATCC BAA-245 / DSM 16553 / LMG 16656 / NCTC 13227 / J2315 / CF5610) (Burkholderia cepacia (strain J2315)).